A 486-amino-acid chain; its full sequence is Intermediate cleaving peptidase 55 (486 aa).

A mitochondrion-targeting transit peptide spans 1-19; that stretch reads MSGYIRTLFIRNRFSNYRL. Residues Asp-317, Asp-328, His-407, Glu-434, and Glu-457 each coordinate Mn(2+).

Belongs to the peptidase M24B family. Requires Mn(2+) as cofactor.

The protein resides in the mitochondrion inner membrane. It carries out the reaction The enzyme cleaves the 36-Pro-Pro-37 bond of cysteine desulfurase (EC 2.8.1.7) removing three amino acid residues (Tyr-Ser-Pro) from the N-terminus after cleavage by mitochondrial processing peptidase.. Aminopeptidase which cleaves preprotein intermediates that carry destabilizing N-ter amino acid residues after the mitochondrial processing peptidase (MPP) cleavage site and is thus critical for stabilization of the mitochondrial proteome. The chain is Intermediate cleaving peptidase 55 (icp55) from Schizosaccharomyces pombe (strain 972 / ATCC 24843) (Fission yeast).